Consider the following 90-residue polypeptide: Long neurotoxin 1 (90 aa).

The first 21 residues, 1-21, serve as a signal peptide directing secretion; sequence MKTLLLTLVVVTIVCLDVGNS. 5 cysteine pairs are disulfide-bonded: C24–C42, C35–C63, C48–C52, C67–C78, and C79–C84.

This sequence belongs to the three-finger toxin family. Long-chain subfamily. Type II alpha-neurotoxin sub-subfamily. In terms of tissue distribution, expressed by the venom gland.

It localises to the secreted. In terms of biological role, binds with high affinity to muscular (alpha-1/CHRNA1) and neuronal (alpha-7/CHRNA7) nicotinic acetylcholine receptor (nAChR) and inhibits acetylcholine from binding to the receptor, thereby impairing neuromuscular and neuronal transmission. In Austrelaps superbus (Lowland copperhead snake), this protein is Long neurotoxin 1.